The sequence spans 80 residues: Acyl carrier protein (80 aa).

Residues 1-79 form the Carrier domain; it reads MTEEEIFNKI…EAVEYIKSHQ (79 aa). O-(pantetheine 4'-phosphoryl)serine is present on Ser39.

This sequence belongs to the acyl carrier protein (ACP) family. In terms of processing, 4'-phosphopantetheine is transferred from CoA to a specific serine of apo-ACP by AcpS. This modification is essential for activity because fatty acids are bound in thioester linkage to the sulfhydryl of the prosthetic group.

It is found in the cytoplasm. The protein operates within lipid metabolism; fatty acid biosynthesis. In terms of biological role, carrier of the growing fatty acid chain in fatty acid biosynthesis. The polypeptide is Acyl carrier protein (Lactobacillus johnsonii (strain CNCM I-12250 / La1 / NCC 533)).